Reading from the N-terminus, the 349-residue chain is Protein-glutamate methylesterase/protein-glutamine glutaminase 1 (349 aa).

In terms of domain architecture, Response regulatory spans 2–119; that stretch reads RTLIVDDSAF…DVNKAEKELV (118 aa). D53 is modified (4-aspartylphosphate). The region spanning 158–345 is the CheB-type methylesterase domain; it reads ILIGSSTGGP…EEIVKRLEAK (188 aa). Active-site residues include S163, H190, and D287.

The protein belongs to the CheB family. In terms of processing, phosphorylated by CheA. Phosphorylation of the N-terminal regulatory domain activates the methylesterase activity.

The protein resides in the cytoplasm. The enzyme catalyses [protein]-L-glutamate 5-O-methyl ester + H2O = L-glutamyl-[protein] + methanol + H(+). It catalyses the reaction L-glutaminyl-[protein] + H2O = L-glutamyl-[protein] + NH4(+). Its function is as follows. Involved in chemotaxis. Part of a chemotaxis signal transduction system that modulates chemotaxis in response to various stimuli. Catalyzes the demethylation of specific methylglutamate residues introduced into the chemoreceptors (methyl-accepting chemotaxis proteins or MCP) by CheR. Also mediates the irreversible deamidation of specific glutamine residues to glutamic acid. The protein is Protein-glutamate methylesterase/protein-glutamine glutaminase 1 of Methanosarcina acetivorans (strain ATCC 35395 / DSM 2834 / JCM 12185 / C2A).